Reading from the N-terminus, the 294-residue chain is 4-hydroxy-tetrahydrodipicolinate synthase (294 aa).

Thr49 is a binding site for pyruvate. Residue Tyr136 is the Proton donor/acceptor of the active site. Lys164 acts as the Schiff-base intermediate with substrate in catalysis. Ile207 is a pyruvate binding site.

The protein belongs to the DapA family. As to quaternary structure, homotetramer; dimer of dimers.

It is found in the cytoplasm. The enzyme catalyses L-aspartate 4-semialdehyde + pyruvate = (2S,4S)-4-hydroxy-2,3,4,5-tetrahydrodipicolinate + H2O + H(+). It functions in the pathway amino-acid biosynthesis; L-lysine biosynthesis via DAP pathway; (S)-tetrahydrodipicolinate from L-aspartate: step 3/4. In terms of biological role, catalyzes the condensation of (S)-aspartate-beta-semialdehyde [(S)-ASA] and pyruvate to 4-hydroxy-tetrahydrodipicolinate (HTPA). The chain is 4-hydroxy-tetrahydrodipicolinate synthase from Natronomonas pharaonis (strain ATCC 35678 / DSM 2160 / CIP 103997 / JCM 8858 / NBRC 14720 / NCIMB 2260 / Gabara) (Halobacterium pharaonis).